Here is a 411-residue protein sequence, read N- to C-terminus: MNNNKKTKKRFSLIIILLIVIAGAIAYWQYSSNNSAPPVSKDTPTANTPNRSTAGSRRPPMPPVQVATSAQEDVPQFLTALGTVKAVNSVTVTSRVEGQLMALHFTEGQQVNQGDLLAEIDPRPFEVQLAQAKGQLAKDQATLANARLDLARYQKLAKTHLVSQQELDNQAALVKQSEASISIDKAAINNAQLQLTYSKITAPISGRVGLKQVDVGNYISGGSSTPIVVINQMDPVDVLFTLPEQDLSQVILARKNNPTLPVIALDRNNKIELAQGALFSVDNQIDATTGTIKLKARFPQQESTLFPNQFVNIRLYVTTLEKAVVIPNAALQMGNEGHFVWVVDEENKVSKLAVEVASQNADKVVIASGLSANQRVVTDGVDRLTQGAKVEIVTPLAPKAKTTDPVVAEKA.

Residues 1–26 form the signal peptide; that stretch reads MNNNKKTKKRFSLIIILLIVIAGAIA. The segment covering 35–55 has biased composition (polar residues); it reads SAPPVSKDTPTANTPNRSTAG. Positions 35–64 are disordered; sequence SAPPVSKDTPTANTPNRSTAGSRRPPMPPV.

It belongs to the membrane fusion protein (MFP) (TC 8.A.1) family. In terms of assembly, part of a tripartite efflux system composed of MdtA, MdtB and MdtC.

It localises to the cell inner membrane. This chain is Multidrug resistance protein MdtA, found in Proteus mirabilis (strain HI4320).